The primary structure comprises 531 residues: rRNA methyltransferase 1, mitochondrial (531 aa).

The transit peptide at 1–40 (MISIFKILSSPKPATTTTNIINPINIINGIRYFSSNQEDY) directs the protein to the mitochondrion. Disordered stretches follow at residues 70–141 (ESHY…RTEY) and 230–277 (IEDE…KKTT). Residues 74–136 (NNNNNSNNNS…NNFRNNNNNN (63 aa)) are compositionally biased toward low complexity. Over residues 247 to 267 (EQNEYEEEQEEEKVQEEEEDN) the composition is skewed to acidic residues.

The protein belongs to the class IV-like SAM-binding methyltransferase superfamily. RNA methyltransferase TrmH family.

Its subcellular location is the mitochondrion. It catalyses the reaction a uridine in rRNA + S-adenosyl-L-methionine = a 2'-O-methyluridine in rRNA + S-adenosyl-L-homocysteine + H(+). In terms of biological role, S-adenosyl-L-methionine-dependent 2'-O-ribose methyltransferase that catalyzes the formation of a 2'-O-methylguanosine in the mitochondrial large subunit ribosomal RNA (mtLSU rRNA), a universally conserved modification in the peptidyl transferase domain of the mtLSU rRNA. This is rRNA methyltransferase 1, mitochondrial (mrm1) from Dictyostelium discoideum (Social amoeba).